A 361-amino-acid polypeptide reads, in one-letter code: MEISKITSPEDWEYFAKGAANILFKYTGNNDYLKRKLLRLRLLKQEEEYISTCELYDFIELRCKDLFPNQIIDIQLTVLDSNFTNKLNSQGNKLMLNERYGLLLPNILDGDYRKISLSQKCQLYFNDNDQDINSVIFEIKPKWLYDNYTDNYCRTCSLNQLKKVPRHFCPLDLLYTETIEQGLNDLFAPIPQDIYAKIEKLIPLKKLTTIYFNNPDNVFQKLKQYQKINNKNDLIKNLTSYSDVSQNLSLVMTLRDVGLFIKIEKFDKNNHIHTSHNNIKNVYRINDNKSNGTKDQDQEIGTNDEEDNDEKFLITCNIYDLDLKSKMKYKHWLKVENDLQEIYNSSNPNWRYCIKYDQIHH.

Positions 138-142 match the EXKPK motif motif; that stretch reads EIKPK. Positions 285–304 are disordered; that stretch reads INDNKSNGTKDQDQEIGTND.

It belongs to the IPK1 type 1 family.

It localises to the nucleus. The catalysed reaction is 1D-myo-inositol 1,3,4,5,6-pentakisphosphate + ATP = 1D-myo-inositol hexakisphosphate + ADP + H(+). Has kinase activity and phosphorylates inositol-1,3,4,5,6-pentakisphosphate (Ins(1,3,4,5,6)P5) to produce 1,2,3,4,5,6-hexakisphosphate (InsP6), also known as phytate. In Candida albicans (strain SC5314 / ATCC MYA-2876) (Yeast), this protein is Inositol-pentakisphosphate 2-kinase (IPK1).